A 63-amino-acid chain; its full sequence is Conotoxin TxMRCL-D012 (63 aa).

The N-terminal stretch at 1 to 19 is a signal peptide; that stretch reads MRCLPVFVILLLLIASTPS. Residues 20-47 constitute a propeptide that is removed on maturation; that stretch reads DTVPLKTKDDMPQASFHGNARRTLQMLS. Residue Gln-50 is modified to Pyrrolidone carboxylic acid.

Belongs to the conotoxin T superfamily. Contains 2 disulfide bonds that can be either 'C1-C3, C2-C4' or 'C1-C4, C2-C3', since these disulfide connectivities have been observed for conotoxins with cysteine framework V (for examples, see AC P0DQQ7 and AC P81755). Expressed by the venom duct.

The protein localises to the secreted. This chain is Conotoxin TxMRCL-D012, found in Conus textile (Cloth-of-gold cone).